Reading from the N-terminus, the 300-residue chain is Acetylglutamate kinase (300 aa).

Substrate is bound by residues Gly68–Gly69, Arg90, and Asn194.

Belongs to the acetylglutamate kinase family. ArgB subfamily.

The protein localises to the cytoplasm. The enzyme catalyses N-acetyl-L-glutamate + ATP = N-acetyl-L-glutamyl 5-phosphate + ADP. Its pathway is amino-acid biosynthesis; L-arginine biosynthesis; N(2)-acetyl-L-ornithine from L-glutamate: step 2/4. Catalyzes the ATP-dependent phosphorylation of N-acetyl-L-glutamate. This Methanocaldococcus jannaschii (strain ATCC 43067 / DSM 2661 / JAL-1 / JCM 10045 / NBRC 100440) (Methanococcus jannaschii) protein is Acetylglutamate kinase.